A 118-amino-acid polypeptide reads, in one-letter code: Large ribosomal subunit protein bL19 (118 aa).

The protein belongs to the bacterial ribosomal protein bL19 family.

Functionally, this protein is located at the 30S-50S ribosomal subunit interface and may play a role in the structure and function of the aminoacyl-tRNA binding site. The sequence is that of Large ribosomal subunit protein bL19 from Helicobacter pylori (strain HPAG1).